The sequence spans 374 residues: Chaperone protein DnaJ (374 aa).

In terms of domain architecture, J spans D5–G70. Residues G137 to K219 form a CR-type zinc finger. Zn(2+)-binding residues include C150, C153, C167, C170, C193, C196, C207, and C210. CXXCXGXG motif repeat units follow at residues C150–G157, C167–G174, C193–G200, and C207–G214.

Belongs to the DnaJ family. In terms of assembly, homodimer. Zn(2+) is required as a cofactor.

Its subcellular location is the cytoplasm. Participates actively in the response to hyperosmotic and heat shock by preventing the aggregation of stress-denatured proteins and by disaggregating proteins, also in an autonomous, DnaK-independent fashion. Unfolded proteins bind initially to DnaJ; upon interaction with the DnaJ-bound protein, DnaK hydrolyzes its bound ATP, resulting in the formation of a stable complex. GrpE releases ADP from DnaK; ATP binding to DnaK triggers the release of the substrate protein, thus completing the reaction cycle. Several rounds of ATP-dependent interactions between DnaJ, DnaK and GrpE are required for fully efficient folding. Also involved, together with DnaK and GrpE, in the DNA replication of plasmids through activation of initiation proteins. The polypeptide is Chaperone protein DnaJ (Clostridium acetobutylicum (strain ATCC 824 / DSM 792 / JCM 1419 / IAM 19013 / LMG 5710 / NBRC 13948 / NRRL B-527 / VKM B-1787 / 2291 / W)).